The chain runs to 336 residues: MLHGVLLIALFSCAAFYIGEMSFVRSISFSPMIVGIILGMLYANSLRNHLPETWVPGIQFCSKKILRIGIILYGFRLTFQDVMAIGLPAMLIDVIIVAVTICGGIYLGKLLKMDRGIALLTSIGSGICGAAAILGAESTIKAKPYKTAVSVSTVVIFGTISMFLYPFLYRNGFCALTPDQMGIYTGATLHEVAHVVGAGDAMGNGISDSAIIVKMIRVMMLVPVLLITTYLVARARKRQVQKGQKFQKIAVPWFAIGFMGVIAFNSFDLLPAQLVAGINTLDTFLLTMAMTALGTETSIDKFRKAGAKPFVLALLLYVWLVVGGYFLVKYLTPYLM.

The next 8 helical transmembrane spans lie at 2–19 (LHGVLLIALFSCAAFYIG), 23–45 (FVRSISFSPMIVGIILGMLYANS), 85–107 (IGLPAMLIDVIIVAVTICGGIYL), 117–134 (IALLTSIGSGICGAAAIL), 147–169 (TAVSVSTVVIFGTISMFLYPFLY), 210–232 (AIIVKMIRVMMLVPVLLITTYLV), 253–275 (WFAIGFMGVIAFNSFDLLPAQLV), and 310–332 (FVLALLLYVWLVVGGYFLVKYLT).

The protein belongs to the UPF0324 family.

The protein localises to the cell membrane. In Bacteroides thetaiotaomicron (strain ATCC 29148 / DSM 2079 / JCM 5827 / CCUG 10774 / NCTC 10582 / VPI-5482 / E50), this protein is UPF0324 membrane protein BT_1919.